An 89-amino-acid chain; its full sequence is MSKLHFLILLSVIVSVFCIEPQDIGCTGISTAEFEEKDATCSKCEEDYSGNGMIDRCRSDCYSGPFFKSCVELLNKGYDEKDENVKPEW.

The signal sequence occupies residues 1-18; it reads MSKLHFLILLSVIVSVFC.

Belongs to the arthropod CHH/MIH/GIH/VIH hormone family. As to expression, expressed by the venom gland.

The protein localises to the secreted. Functionally, may increase the toxicity of alpha-latrotoxin and/or other venom components. Is non-toxic to mice and to the cockroach Periplaneta americana. This chain is Alpha-latrotoxin associated low molecular weight protein SGV242-280, found in Steatoda grossa (False black widow).